Here is a 244-residue protein sequence, read N- to C-terminus: Ribonuclease PH (244 aa).

Residues arginine 86 and 124 to 126 (GTR) each bind phosphate.

It belongs to the RNase PH family. In terms of assembly, homohexameric ring arranged as a trimer of dimers.

It carries out the reaction tRNA(n+1) + phosphate = tRNA(n) + a ribonucleoside 5'-diphosphate. Phosphorolytic 3'-5' exoribonuclease that plays an important role in tRNA 3'-end maturation. Removes nucleotide residues following the 3'-CCA terminus of tRNAs; can also add nucleotides to the ends of RNA molecules by using nucleoside diphosphates as substrates, but this may not be physiologically important. Probably plays a role in initiation of 16S rRNA degradation (leading to ribosome degradation) during starvation. This is Ribonuclease PH from Glaesserella parasuis serovar 5 (strain SH0165) (Haemophilus parasuis).